The sequence spans 312 residues: Phosphatidate cytidylyltransferase (312 aa).

The disordered stretch occupies residues 1–31 (MASTDPGTGTPLDESVPGIKRAMRQSTKNTP). Helical transmembrane passes span 37 to 57 (LPAAIAVGLSIGGVLVATLVF), 58 to 78 (APRIWVVLCAGAIFVASHEVV), 85 to 105 (GYVIPAIPLLIGGQFTVWLTW), 110 to 130 (VGALAGFGATVVVCMIWRLVM), 157 to 177 (ATVFLAAWVPLFASFAALLVY), 186 to 206 (FCLMIAVVASDVGGYTVGVLF), 223 to 243 (GFAGSLVCGTTATILTATFLA), and 247 to 267 (PWVGALLSFVLVLTCTLGDLV).

The protein belongs to the CDS family.

Its subcellular location is the cell membrane. The enzyme catalyses a 1,2-diacyl-sn-glycero-3-phosphate + CTP + H(+) = a CDP-1,2-diacyl-sn-glycerol + diphosphate. The protein operates within phospholipid metabolism; CDP-diacylglycerol biosynthesis; CDP-diacylglycerol from sn-glycerol 3-phosphate: step 3/3. This Mycobacterium leprae (strain TN) protein is Phosphatidate cytidylyltransferase (cdsA).